Here is a 421-residue protein sequence, read N- to C-terminus: MSYHYDGIPDIEIDLYWNKARNHLLKAQVECEESLKLLSTIRSEMDSCQKSRLKLQFILNCLVNQVEFFSSVILEKCIAVELLDNEWSKVVLVGVVKDLNYWQDEITNKINALKNTKYDLNAEYKSLADFICEDHVEILQQKLDEVPFIKKQVSNIRQHYKSIKEGVQYQLKAGKVKKLKKYYETHFSRDNHLFELLEGEYLTKLNSYESELTDYIRSITDHFDKCSILKADGLPPQDLKDLFEVVKNDDAELEHIRELIYESDAEITQFYKNVEGTITSIKENVADFYGLSTKIMVELEKCEEYVSIFQDIAKLVSVYKESCIRKIEQVQELCEVYDKFKKAYFNLLKERERRKSVAIQMKSILDECKGKLMALNEDDLDHRQQFLHENGDYLPENIWPGKIDDMTPLYSLEYTIYNEQK.

The protein belongs to the ATG17 family. In terms of assembly, forms a complex with ATG13, ATG29 and CIS1/ATG31. The ATG17-ATG29-ATG31 complex interacts with the ATG1-ATG13 complex. Forms a complex with SNX4 and ATG20. Interacts with ATG11.

Its subcellular location is the cytoplasm. The protein resides in the preautophagosomal structure membrane. Autophagy-specific protein that functions with ATG13, ATG29, and CIS1/ATG31 in response to autophagy-inducing signals as a scaffold to recruit other ATG proteins to organize pre-autophagosomal structure (PAS) formation. Modulates the timing and magnitude of the autophagy response, such as the size of the sequestering vesicles, through interacting with and regulating ATG1 kinase activity. Plays particularly a role in pexophagy and nucleophagy. With ATG13, is required for ATG1 activation by autophosphorylation. Recruits ATG9 to the pre-autophagosomal structure. The chain is Autophagy-related protein 17 from Kluyveromyces marxianus (strain DMKU3-1042 / BCC 29191 / NBRC 104275) (Yeast).